We begin with the raw amino-acid sequence, 51 residues long: MKEQNSFNLLQEVTESELDLILGAKGGSGVIHTISHECNMNSWQFVFTCCS.

Residues 1–24 constitute a propeptide that is removed on maturation; sequence MKEQNSFNLLQEVTESELDLILGA. Residues 33–38 constitute a cross-link (beta-methyllanthionine (Thr-Cys)); the sequence is TISHEC. Cross-links (lanthionine (Ser-Cys)) lie at residues 35-49 and 42-50; these read SHECNMNSWQFVFTC and SWQFVFTCC. At T48 the chain carries (Z)-2,3-didehydrobutyrine.

The protein belongs to the type A lantibiotic family. As to quaternary structure, monomer or homodimer. In terms of processing, maturation of lantibiotics involves the enzymatic conversion of Thr, and Ser into dehydrated AA and the formation of thioether bonds with cysteine. This is followed by membrane translocation and cleavage of the modified precursor. It is established that the 2,3-didehydrobutyrine is the Z-isomer.

In terms of biological role, lanthionine-containing peptide antibiotic (lantibiotic) active on Gram-positive bacteria. The bactericidal activity of lantibiotics is based on depolarization of energized bacterial cytoplasmic membranes, initiated by the formation of aqueous transmembrane pores. Lacticin 481 is a broad spectrum bacteriocin exhibiting activity against a wide range of lactic acid bacteria and C.tyrobutyricum. This is Lantibiotic lacticin-481 (lctA) from Lactococcus lactis subsp. lactis (Streptococcus lactis).